The sequence spans 1377 residues: DNA-directed RNA polymerase subunit beta (1377 aa).

This sequence belongs to the RNA polymerase beta chain family. The RNAP catalytic core consists of 2 alpha, 1 beta, 1 beta' and 1 omega subunit. When a sigma factor is associated with the core the holoenzyme is formed, which can initiate transcription.

It carries out the reaction RNA(n) + a ribonucleoside 5'-triphosphate = RNA(n+1) + diphosphate. In terms of biological role, DNA-dependent RNA polymerase catalyzes the transcription of DNA into RNA using the four ribonucleoside triphosphates as substrates. This chain is DNA-directed RNA polymerase subunit beta, found in Brucella melitensis biotype 2 (strain ATCC 23457).